Reading from the N-terminus, the 456-residue chain is Bifunctional protein GlmU (456 aa).

The segment at 1–228 (MSARLAAIVL…PQEIFGINDR (228 aa)) is pyrophosphorylase. UDP-N-acetyl-alpha-D-glucosamine-binding positions include 10 to 13 (LAAG), lysine 24, glutamine 75, and 80 to 81 (GT). Residue aspartate 105 participates in Mg(2+) binding. Residues glycine 142, glutamate 157, asparagine 172, and asparagine 226 each coordinate UDP-N-acetyl-alpha-D-glucosamine. Asparagine 226 lines the Mg(2+) pocket. A linker region spans residues 229–249 (LQLSQASRILNERTLVGLMLS). The N-acetyltransferase stretch occupies residues 250–456 (GVTIVDPLRV…KAPYERTEDG (207 aa)). UDP-N-acetyl-alpha-D-glucosamine contacts are provided by arginine 331 and lysine 349. Histidine 361 acts as the Proton acceptor in catalysis. 2 residues coordinate UDP-N-acetyl-alpha-D-glucosamine: tyrosine 364 and asparagine 375. Acetyl-CoA contacts are provided by residues alanine 378, 384 to 385 (NY), alanine 421, and arginine 437.

This sequence in the N-terminal section; belongs to the N-acetylglucosamine-1-phosphate uridyltransferase family. It in the C-terminal section; belongs to the transferase hexapeptide repeat family. As to quaternary structure, homotrimer. Mg(2+) is required as a cofactor.

The protein localises to the cytoplasm. It carries out the reaction alpha-D-glucosamine 1-phosphate + acetyl-CoA = N-acetyl-alpha-D-glucosamine 1-phosphate + CoA + H(+). The enzyme catalyses N-acetyl-alpha-D-glucosamine 1-phosphate + UTP + H(+) = UDP-N-acetyl-alpha-D-glucosamine + diphosphate. It participates in nucleotide-sugar biosynthesis; UDP-N-acetyl-alpha-D-glucosamine biosynthesis; N-acetyl-alpha-D-glucosamine 1-phosphate from alpha-D-glucosamine 6-phosphate (route II): step 2/2. The protein operates within nucleotide-sugar biosynthesis; UDP-N-acetyl-alpha-D-glucosamine biosynthesis; UDP-N-acetyl-alpha-D-glucosamine from N-acetyl-alpha-D-glucosamine 1-phosphate: step 1/1. It functions in the pathway bacterial outer membrane biogenesis; LPS lipid A biosynthesis. Its function is as follows. Catalyzes the last two sequential reactions in the de novo biosynthetic pathway for UDP-N-acetylglucosamine (UDP-GlcNAc). The C-terminal domain catalyzes the transfer of acetyl group from acetyl coenzyme A to glucosamine-1-phosphate (GlcN-1-P) to produce N-acetylglucosamine-1-phosphate (GlcNAc-1-P), which is converted into UDP-GlcNAc by the transfer of uridine 5-monophosphate (from uridine 5-triphosphate), a reaction catalyzed by the N-terminal domain. The polypeptide is Bifunctional protein GlmU (Gloeobacter violaceus (strain ATCC 29082 / PCC 7421)).